The following is a 110-amino-acid chain: Thiosulfate sulfurtransferase GlpE (110 aa).

A Rhodanese domain is found at 17-105 (RENGAQVVDI…WRSVYPADTS (89 aa)). Cysteine 65 serves as the catalytic Cysteine persulfide intermediate.

Belongs to the GlpE family.

It localises to the cytoplasm. The enzyme catalyses thiosulfate + hydrogen cyanide = thiocyanate + sulfite + 2 H(+). It carries out the reaction thiosulfate + [thioredoxin]-dithiol = [thioredoxin]-disulfide + hydrogen sulfide + sulfite + 2 H(+). In terms of biological role, transferase that catalyzes the transfer of sulfur from thiosulfate to thiophilic acceptors such as cyanide or dithiols. May function in a CysM-independent thiosulfate assimilation pathway by catalyzing the conversion of thiosulfate to sulfite, which can then be used for L-cysteine biosynthesis. This chain is Thiosulfate sulfurtransferase GlpE, found in Pseudomonas aeruginosa (strain LESB58).